The following is a 536-amino-acid chain: Glucose-6-phosphate isomerase (536 aa).

Glutamate 345 acts as the Proton donor in catalysis. Active-site residues include histidine 376 and lysine 505.

It belongs to the GPI family.

Its subcellular location is the cytoplasm. It catalyses the reaction alpha-D-glucose 6-phosphate = beta-D-fructose 6-phosphate. Its pathway is carbohydrate biosynthesis; gluconeogenesis. It functions in the pathway carbohydrate degradation; glycolysis; D-glyceraldehyde 3-phosphate and glycerone phosphate from D-glucose: step 2/4. In terms of biological role, catalyzes the reversible isomerization of glucose-6-phosphate to fructose-6-phosphate. This Ruegeria sp. (strain TM1040) (Silicibacter sp.) protein is Glucose-6-phosphate isomerase.